The following is a 316-amino-acid chain: Cysteine synthase (316 aa).

Residues asparagine 7 and arginine 35 each contribute to the hydrogen sulfide site. Lysine 42 is modified (N6-(pyridoxal phosphate)lysine). Residues asparagine 72 and 177 to 181 (GTGGS) each bind pyridoxal 5'-phosphate. Leucine 268 is a hydrogen sulfide binding site. Position 272 (serine 272) interacts with pyridoxal 5'-phosphate.

It belongs to the cysteine synthase/cystathionine beta-synthase family. In terms of assembly, homodimer. Pyridoxal 5'-phosphate serves as cofactor.

It catalyses the reaction O-acetyl-L-serine + hydrogen sulfide = L-cysteine + acetate. The protein operates within amino-acid biosynthesis; L-cysteine biosynthesis; L-cysteine from L-serine: step 2/2. The chain is Cysteine synthase (cysK) from Haemophilus influenzae (strain ATCC 51907 / DSM 11121 / KW20 / Rd).